The following is a 242-amino-acid chain: Uridylate kinase (242 aa).

11 to 14 (KLSG) is an ATP binding site. An involved in allosteric activation by GTP region spans residues 19–24 (GDKGVG). Gly-53 contacts UMP. Gly-54 and Arg-58 together coordinate ATP. UMP contacts are provided by residues Asp-73 and 134–141 (IGSPYFST). ATP-binding residues include Asn-162, Tyr-168, and Asp-171.

It belongs to the UMP kinase family. In terms of assembly, homohexamer.

It is found in the cytoplasm. The enzyme catalyses UMP + ATP = UDP + ADP. Its pathway is pyrimidine metabolism; CTP biosynthesis via de novo pathway; UDP from UMP (UMPK route): step 1/1. Allosterically activated by GTP. Inhibited by UTP. Catalyzes the reversible phosphorylation of UMP to UDP. This is Uridylate kinase from Streptococcus agalactiae serotype III (strain NEM316).